Reading from the N-terminus, the 399-residue chain is Guanine nucleotide-binding protein negative regulator 1 (399 aa).

WD repeat units lie at residues 44-83 (KPLN…LSKK), 105-145 (YSYS…NKAS), 150-194 (DHQE…VMTT), 207-247 (SLKG…PCQL), 252-292 (ERGN…DMVY), and 296-337 (GHRG…EETH).

Interacts with gpa1.

The protein resides in the cytoplasm. Negatively regulates the pheromone-response pathway. Acts as a structural mimic of the G protein beta subunit thereby interacting with gpa1 which then inhibits gpa1 signaling. This is Guanine nucleotide-binding protein negative regulator 1 (gnr1) from Schizosaccharomyces pombe (strain 972 / ATCC 24843) (Fission yeast).